Here is a 109-residue protein sequence, read N- to C-terminus: MSITDVLSADDIAAALQECQDPDTFEPQKFFQTSGLSKMSASQVKDVFRFIDNDQSGYLDEEELKFFLQKFESGARELTESETKSLMAAADNDGDGKIGADEFQEMVHS.

S2 carries the N-acetylserine modification. EF-hand domains follow at residues 39 to 74 and 78 to 109; these read MSASQVKDVFRFIDNDQSGYLDEEELKFFLQKFESG and LTESETKSLMAAADNDGDGKIGADEFQEMVHS. Ca(2+)-binding residues include D52, D54, S56, Y58, E63, D91, D93, D95, K97, and E102.

This sequence belongs to the parvalbumin family. In terms of tissue distribution, abundant in the organ of Corti.

In terms of biological role, has some calmodulin-like activity with respect to enzyme activation and growth regulation. Binds two calcium ions. This chain is Oncomodulin (OCM), found in Cavia porcellus (Guinea pig).